A 510-amino-acid polypeptide reads, in one-letter code: ATP synthase subunit alpha (510 aa).

169 to 176 (GDRQTGKT) serves as a coordination point for ATP.

This sequence belongs to the ATPase alpha/beta chains family. As to quaternary structure, F-type ATPases have 2 components, CF(1) - the catalytic core - and CF(0) - the membrane proton channel. CF(1) has five subunits: alpha(3), beta(3), gamma(1), delta(1), epsilon(1). CF(0) has three main subunits: a(1), b(2) and c(9-12). The alpha and beta chains form an alternating ring which encloses part of the gamma chain. CF(1) is attached to CF(0) by a central stalk formed by the gamma and epsilon chains, while a peripheral stalk is formed by the delta and b chains.

It is found in the cell inner membrane. It carries out the reaction ATP + H2O + 4 H(+)(in) = ADP + phosphate + 5 H(+)(out). Functionally, produces ATP from ADP in the presence of a proton gradient across the membrane. The alpha chain is a regulatory subunit. The sequence is that of ATP synthase subunit alpha from Azorhizobium caulinodans (strain ATCC 43989 / DSM 5975 / JCM 20966 / LMG 6465 / NBRC 14845 / NCIMB 13405 / ORS 571).